Here is a 633-residue protein sequence, read N- to C-terminus: Membrane protein insertase YidC (633 aa).

A run of 6 helical transmembrane segments spans residues 3–23 (KNTL…SWFN), 377–397 (FIHN…IILF), 453–473 (LPML…PSAI), 499–519 (IPII…LMTI), 541–561 (GMKA…NQYA), and 562–582 (SGLT…TLIF). Residues 612–633 (LEEAQRAQQETLRKQQEAKKKR) are disordered.

It belongs to the OXA1/ALB3/YidC family. Type 1 subfamily. Interacts with the Sec translocase complex via SecD. Specifically interacts with transmembrane segments of nascent integral membrane proteins during membrane integration.

Its subcellular location is the cell inner membrane. Its function is as follows. Required for the insertion and/or proper folding and/or complex formation of integral membrane proteins into the membrane. Involved in integration of membrane proteins that insert both dependently and independently of the Sec translocase complex, as well as at least some lipoproteins. Aids folding of multispanning membrane proteins. The sequence is that of Membrane protein insertase YidC from Parabacteroides distasonis (strain ATCC 8503 / DSM 20701 / CIP 104284 / JCM 5825 / NCTC 11152).